The sequence spans 2507 residues: Highly reducing polyketide synthase lcsB (2507 aa).

A Ketosynthase family 3 (KS3) domain is found at 2–393; it reads AEPIAVVGMA…GVNAHVIVES (392 aa). Positions 399–501 are disordered; the sequence is NHDRGLSNGS…RNGYSGDDVE (103 aa). 2 stretches are compositionally biased toward polar residues: residues 405-414 and 470-488; these read SNGSTTSSSP and NDTP…TSHT. The malonyl-CoA:ACP transacylase (MAT) domain stretch occupies residues 581–900; it reads WVFTGQGAQW…DESLLQLAGK (320 aa). An N-terminal hotdog fold region spans residues 953 to 1080; that stretch reads HELLGSRVTE…GEARASVDKA (128 aa). The segment at 953–1232 is dehydratase (DH) domain; the sequence is HELLGSRVTE…FKASALTRSD (280 aa). The region spanning 953–1234 is the PKS/mFAS DH domain; sequence HELLGSRVTE…ASALTRSDDE (282 aa). The active-site Proton acceptor; for dehydratase activity is His-984. Residues 1092-1234 are C-terminal hotdog fold; it reads ARTVDANEWY…ASALTRSDDE (143 aa). The active-site Proton donor; for dehydratase activity is the Asp-1151. Positions 1402-1570 are methyltransferase (CMet) domain; that stretch reads LGHTNPRLRI…EMVAAGFAEP (169 aa). Positions 1793–2105 are enoyl reductase (ER) (ER) domain; the sequence is GLLHTMGWSQ…GGRHIGKIIV (313 aa). Positions 2130–2303 are ketoreductase (KR) domain; sequence SYLLVGGLGG…ASVIDIGVMG (174 aa). Residues 2425-2503 enclose the Carrier domain; that stretch reads EESTVIIATA…SLGDYIRTAL (79 aa). Ser-2463 carries the O-(pantetheine 4'-phosphoryl)serine modification.

The protein operates within secondary metabolite biosynthesis. In terms of biological role, highly reducing polyketide synthase; part of the gene cluster that mediates the biosynthesis of the lipopeptide antibiotics leucinostatins that show extensive biological activities, including antimalarial, antiviral, antibacterial, antifungal, and antitumor activities, as well as phytotoxic. Leucinostatin A contains nine amino acid residues, including the unusual amino acid 4-methyl-L-proline (MePro), 2-amino-6-hydroxy-4-methyl-8-oxodecanoic acid (AHyMeOA), 3-hydroxyleucine (HyLeu), alpha-aminoisobutyric acid (AIB), beta-Ala, a 4-methylhex-2-enoic acid at the N-terminus as well as a N1,N1-dimethylpropane-1,2-diamine (DPD) at the C-terminus. The biosynthesis of leucinostatins is probably initiated with the assembly of 4-methylhex-2-enoic acid by a reducing PKS. Two reducing polyketide synthases, lcsB and lcsC, have been identified in the cluster and it is not clear which is the one that assembles 4-methylhex-2-enoic acid since both contain KS, AT, DH, cMT, ER, KR and ACP domains. The polyketide residue might be transferred to the NRPS lcsA, mediated by two additional enzymes, the acyl-CoA ligase lcsD and the thioesterase lcsE. The linear polyketide carboxylic acid, which is released from PKS, is converted to a CoA thioester by lcsD, and then lcsE hydrolyzes the thiol bond and shuttles the polyketide intermediate to lcsA. The C domain of the first module catalyzed the condensation of 4-methylhex-2-enoic acid and MePro carried by domain A1, followed by successive condensations of nine amino acids to trigger the elongation of the linear peptide. A5 and A6 domains of lcsA are proposed to incorporate leucine, A2 AHyMeOA, and A3 incorporates HyLeu. A4, A7 and A8 incorporate AIB. The AHyMeOA in leucinostatin A activated by the A2 might be produced by the second PKS (lcsB or lcsC) present within the cluster. The MePro is probably produced via leucine cyclization and may originate from a separate pathway, independent of the cluster. Another nonproteinogenic amino acid, beta-Ala, could be produced by an aspartic acid decarboxylase also localized outside of the cluster. Two candidates are VFPBJ_01400 and VFPBJ_10476. The final peptide scaffold may be released by the NAD(P)H-dependent thioester reductase (TE) at the C-terminal region of lcsA. Transamination of the lcsA product by the transaminase lcsP may produce DPD at the C-terminus. Further hydroxylation steps performed alternatively by the cytochrome P450 monooxygenases lcsI, lcsK andr lcsN then yield the non-methylated leucinostatins precursor. It is also possible that leucines can be hydroxylated prior to their incorporation into the peptide. Varying extents of methylation then lead to the formation of leucinostatins A and B. This chain is Highly reducing polyketide synthase lcsB, found in Purpureocillium lilacinum (Paecilomyces lilacinus).